The sequence spans 76 residues: DNA-directed RNA polymerase subunit epsilon (76 aa).

This sequence belongs to the RNA polymerase subunit epsilon family. As to quaternary structure, RNAP is composed of a core of 2 alpha, a beta and a beta' subunit. The core is associated with a delta subunit, and at least one of epsilon or omega. When a sigma factor is associated with the core the holoenzyme is formed, which can initiate transcription.

The enzyme catalyses RNA(n) + a ribonucleoside 5'-triphosphate = RNA(n+1) + diphosphate. A non-essential component of RNA polymerase (RNAP). This chain is DNA-directed RNA polymerase subunit epsilon, found in Streptococcus mutans serotype c (strain ATCC 700610 / UA159).